The sequence spans 1018 residues: Isoleucine--tRNA ligase (1018 aa).

The 'HIGH' region motif lies at 43–53 (PYTTGRIHLGT). Residues 586 to 590 (KMSKS) carry the 'KMSKS' region motif. Position 589 (Lys589) interacts with ATP.

The protein belongs to the class-I aminoacyl-tRNA synthetase family. IleS type 2 subfamily. Monomer. The cofactor is Zn(2+).

The protein resides in the cytoplasm. It carries out the reaction tRNA(Ile) + L-isoleucine + ATP = L-isoleucyl-tRNA(Ile) + AMP + diphosphate. In terms of biological role, catalyzes the attachment of isoleucine to tRNA(Ile). As IleRS can inadvertently accommodate and process structurally similar amino acids such as valine, to avoid such errors it has two additional distinct tRNA(Ile)-dependent editing activities. One activity is designated as 'pretransfer' editing and involves the hydrolysis of activated Val-AMP. The other activity is designated 'posttransfer' editing and involves deacylation of mischarged Val-tRNA(Ile). The sequence is that of Isoleucine--tRNA ligase from Archaeoglobus fulgidus (strain ATCC 49558 / DSM 4304 / JCM 9628 / NBRC 100126 / VC-16).